A 264-amino-acid chain; its full sequence is Indole-3-glycerol phosphate synthase (264 aa).

This sequence belongs to the TrpC family.

The enzyme catalyses 1-(2-carboxyphenylamino)-1-deoxy-D-ribulose 5-phosphate + H(+) = (1S,2R)-1-C-(indol-3-yl)glycerol 3-phosphate + CO2 + H2O. It functions in the pathway amino-acid biosynthesis; L-tryptophan biosynthesis; L-tryptophan from chorismate: step 4/5. The polypeptide is Indole-3-glycerol phosphate synthase (Polaromonas sp. (strain JS666 / ATCC BAA-500)).